The primary structure comprises 1269 residues: DNA-directed RNA polymerase subunit beta (1269 aa).

This sequence belongs to the RNA polymerase beta chain family. As to quaternary structure, the RNAP catalytic core consists of 2 alpha, 1 beta, 1 beta' and 1 omega subunit. When a sigma factor is associated with the core the holoenzyme is formed, which can initiate transcription.

The catalysed reaction is RNA(n) + a ribonucleoside 5'-triphosphate = RNA(n+1) + diphosphate. DNA-dependent RNA polymerase catalyzes the transcription of DNA into RNA using the four ribonucleoside triphosphates as substrates. The protein is DNA-directed RNA polymerase subunit beta of Porphyromonas gingivalis (strain ATCC 33277 / DSM 20709 / CIP 103683 / JCM 12257 / NCTC 11834 / 2561).